Here is a 145-residue protein sequence, read N- to C-terminus: NADH-quinone oxidoreductase subunit A 1 (145 aa).

3 consecutive transmembrane segments (helical) span residues 18 to 38 (ILPL…LLLA), 71 to 91 (VPFY…VFIF), and 104 to 124 (GLIH…WLWL).

Belongs to the complex I subunit 3 family. As to quaternary structure, NDH-1 is composed of 14 different subunits. Subunits NuoA, H, J, K, L, M, N constitute the membrane sector of the complex.

It localises to the cell inner membrane. The catalysed reaction is a quinone + NADH + 5 H(+)(in) = a quinol + NAD(+) + 4 H(+)(out). Its function is as follows. NDH-1 shuttles electrons from NADH, via FMN and iron-sulfur (Fe-S) centers, to quinones in the respiratory chain. The immediate electron acceptor for the enzyme in this species is believed to be ubiquinone. Couples the redox reaction to proton translocation (for every two electrons transferred, four hydrogen ions are translocated across the cytoplasmic membrane), and thus conserves the redox energy in a proton gradient. This Geotalea uraniireducens (strain Rf4) (Geobacter uraniireducens) protein is NADH-quinone oxidoreductase subunit A 1.